Reading from the N-terminus, the 77-residue chain is Small ribosomal subunit protein bS21 (77 aa).

Residues 38 to 52 (KPSEKRAREKAEAVR) show a composition bias toward basic and acidic residues. Positions 38 to 77 (KPSEKRAREKAEAVRRTRKLARKRAQREGLISNGRGSPLK) are disordered. Positions 53-62 (RTRKLARKRA) are enriched in basic residues.

Belongs to the bacterial ribosomal protein bS21 family.

The protein is Small ribosomal subunit protein bS21 of Bartonella henselae (strain ATCC 49882 / DSM 28221 / CCUG 30454 / Houston 1) (Rochalimaea henselae).